The sequence spans 403 residues: Propionate kinase (403 aa).

This sequence belongs to the acetokinase family. PduW subfamily.

The protein resides in the cytoplasm. It catalyses the reaction propanoate + ATP = propanoyl phosphate + ADP. Its pathway is polyol metabolism; 1,2-propanediol degradation. Works with phosphate acetyltransferase (pta) to capture exogenous propionate and regenerate propionyl-CoA during degradation of 1,2-propanediol (1,2-PD). The protein is Propionate kinase of Citrobacter rodentium (strain ICC168) (Citrobacter freundii biotype 4280).